We begin with the raw amino-acid sequence, 966 residues long: Protein STICHEL-like 4 (966 aa).

Disordered regions lie at residues 64 to 118 (RSLR…DRSS) and 200 to 237 (RDNA…REQN). Positions 75-84 (LKEDHQDSRE) are enriched in basic and acidic residues. A compositionally biased stretch (polar residues) spans 98–108 (PIVSFGTSKVT). Residues 109–118 (PSDEKFDRSS) show a composition bias toward basic and acidic residues. Over residues 208–217 (SEMSIASNSV) the composition is skewed to polar residues. Basic and acidic residues predominate over residues 219 to 236 (RGEKYEGEEGGGGRDREQ). 384-391 (GPNGTGKT) provides a ligand contact to ATP. Residues Cys403, Cys412, Cys415, and Cys418 each coordinate Zn(2+). A coiled-coil region spans residues 650-678 (SKEDMEKLKQALKTLSESEKQLRVSNDKL). A compositionally biased stretch (polar residues) spans 706 to 717 (FNHTPLTDSDPS). The disordered stretch occupies residues 706–733 (FNHTPLTDSDPSNHVVAGTRRDDSKQGF).

Belongs to the DnaX/STICHEL family.

The chain is Protein STICHEL-like 4 from Arabidopsis thaliana (Mouse-ear cress).